The sequence spans 71 residues: MPVIKVRENEPFDVALRRFKRSCEKAGILSEVRRREHYEKPTAERKRKKAAAVKRHMKKLSRDNARRVKLY.

The disordered stretch occupies residues 37–71 (HYEKPTAERKRKKAAAVKRHMKKLSRDNARRVKLY). The segment covering 45-59 (RKRKKAAAVKRHMKK) has biased composition (basic residues). Over residues 60–71 (LSRDNARRVKLY) the composition is skewed to basic and acidic residues.

Belongs to the bacterial ribosomal protein bS21 family.

The chain is Small ribosomal subunit protein bS21 from Pseudoalteromonas translucida (strain TAC 125).